The sequence spans 458 residues: Argininosuccinate lyase (458 aa).

It belongs to the lyase 1 family. Argininosuccinate lyase subfamily.

The protein resides in the cytoplasm. It catalyses the reaction 2-(N(omega)-L-arginino)succinate = fumarate + L-arginine. The protein operates within amino-acid biosynthesis; L-arginine biosynthesis; L-arginine from L-ornithine and carbamoyl phosphate: step 3/3. This is Argininosuccinate lyase from Geobacter metallireducens (strain ATCC 53774 / DSM 7210 / GS-15).